Consider the following 1955-residue polypeptide: 227 kDa spindle- and centromere-associated protein (1955 aa).

4 coiled-coil regions span residues 82-129 (KKRI…NDDV), 152-317 (EWAS…ELES), 385-1747 (VRNI…LIAL), and 1770-1813 (ERIV…ERFI). Disordered regions lie at residues 1865-1896 (PTEQHASRGKEAYRTSSTIKSSEGTTRESYTY) and 1912-1955 (MTSS…TFSE). The segment covering 1878–1896 (RTSSTIKSSEGTTRESYTY) has biased composition (polar residues). Basic residues predominate over residues 1938–1948 (RKSRPATRKQQ).

It is found in the cytoplasm. The protein resides in the cytoskeleton. Its subcellular location is the microtubule organizing center. The protein localises to the centrosome. It localises to the chromosome. It is found in the centromere. The protein resides in the kinetochore. Its subcellular location is the spindle. Functionally, may play a role in the organization of the spindle apparatus and its interaction with the centromeres. The sequence is that of 227 kDa spindle- and centromere-associated protein (PUMA1) from Parascaris univalens (Nematode worm).